A 102-amino-acid chain; its full sequence is Chorion protein S15 (102 aa).

The signal sequence occupies residues 1–18 (MKFLIAFVAIAFFACVSA).

This sequence belongs to the chorion protein S15/S18 family.

The protein resides in the secreted. Its function is as follows. Chorion membrane (egg shell) protein; plays a role in protecting the egg from the environment. This Drosophila grimshawi (Hawaiian fruit fly) protein is Chorion protein S15 (Cp15).